A 241-amino-acid polypeptide reads, in one-letter code: Orotidine 5'-phosphate decarboxylase (241 aa).

Residues D16, K37, 64-73 (DLKFHDIPTT), T128, R190, Q199, G219, and R220 each bind substrate. The Proton donor role is filled by K66.

This sequence belongs to the OMP decarboxylase family. Type 1 subfamily. As to quaternary structure, homodimer.

It catalyses the reaction orotidine 5'-phosphate + H(+) = UMP + CO2. It participates in pyrimidine metabolism; UMP biosynthesis via de novo pathway; UMP from orotate: step 2/2. Its function is as follows. Catalyzes the decarboxylation of orotidine 5'-monophosphate (OMP) to uridine 5'-monophosphate (UMP). In Prochlorococcus marinus (strain NATL1A), this protein is Orotidine 5'-phosphate decarboxylase.